The following is a 276-amino-acid chain: MLVIRLIACTFLFITPSLLAKPFPAERIISLAPHATEIAYAAGLGDKLVAVSEYSDYPPQALELERVANHQTINIEKILTLKPDLIIAWPAGNPPRELAKLRQLGFTIYDSQTKTLDEIADNIEALSHYSANPEVGQKAAHDFRQRLQDLRTQYASNQPIRYFYQLSEKPIITLAQGHWPSEVFSLCGGVNIFADSEVPYPQVSIEQVLVKQPQVIFTSEHAIANGHMWRAWQAELSAVQNDQVWALNADWLNRPTPRTLDAVEQVCTYLKIAQKQ.

The signal sequence occupies residues 1–20 (MLVIRLIACTFLFITPSLLA). Residues 27–274 (RIISLAPHAT…QVCTYLKIAQ (248 aa)) enclose the Fe/B12 periplasmic-binding domain. Tyr54 is a binding site for cyanocob(III)alamin. An intrachain disulfide couples Cys187 to Cys267.

This sequence belongs to the BtuF family. In terms of assembly, the complex is composed of two ATP-binding proteins (BtuD), two transmembrane proteins (BtuC) and a solute-binding protein (BtuF).

The protein resides in the periplasm. Functionally, part of the ABC transporter complex BtuCDF involved in vitamin B12 import. Binds vitamin B12 and delivers it to the periplasmic surface of BtuC. The sequence is that of Vitamin B12-binding protein from Vibrio cholerae serotype O1 (strain ATCC 39541 / Classical Ogawa 395 / O395).